The sequence spans 335 residues: Serine/threonine-protein kinase crk1 (335 aa).

The region spanning 11 to 292 (YVKERKVGEG…AQQALEHHYF (282 aa)) is the Protein kinase domain. Residues 17–25 (VGEGTYAVV) and lysine 40 contribute to the ATP site. Residue aspartate 133 is the Proton acceptor of the active site. Position 162 is a phosphoserine (serine 162). Serine 165 carries the phosphoserine; by CAK modification. Position 318 is a phosphoserine (serine 318).

This sequence belongs to the protein kinase superfamily. CMGC Ser/Thr protein kinase family. CDC2/CDKX subfamily. In terms of assembly, one of the nine subunits forming the core-TFIIH basal transcription factor. Interacts with mcs2 and tfb3.

It localises to the cytoplasm. It is found in the nucleus. The catalysed reaction is [DNA-directed RNA polymerase] + ATP = phospho-[DNA-directed RNA polymerase] + ADP + H(+). Protein kinase essential for cell proliferation, where it is required for completion of cytokinesis. Phosphorylates the C-terminal repeat domain (CTD) of RNA polymerase II. In Schizosaccharomyces pombe (strain 972 / ATCC 24843) (Fission yeast), this protein is Serine/threonine-protein kinase crk1 (crk1).